Consider the following 112-residue polypeptide: Large ribosomal subunit protein uL24 (112 aa).

The segment at 92-112 (ERDGKQKTVRVRVSKSTGKDL) is disordered.

The protein belongs to the universal ribosomal protein uL24 family. As to quaternary structure, part of the 50S ribosomal subunit.

In terms of biological role, one of two assembly initiator proteins, it binds directly to the 5'-end of the 23S rRNA, where it nucleates assembly of the 50S subunit. Its function is as follows. One of the proteins that surrounds the polypeptide exit tunnel on the outside of the subunit. This is Large ribosomal subunit protein uL24 from Kocuria rhizophila (strain ATCC 9341 / DSM 348 / NBRC 103217 / DC2201).